A 268-amino-acid polypeptide reads, in one-letter code: Putative S-adenosyl-L-methionine-dependent methyltransferase MAP_0663 (268 aa).

S-adenosyl-L-methionine contacts are provided by residues Asp124 and 153–154 (DL).

The protein belongs to the UPF0677 family.

In terms of biological role, exhibits S-adenosyl-L-methionine-dependent methyltransferase activity. This chain is Putative S-adenosyl-L-methionine-dependent methyltransferase MAP_0663, found in Mycolicibacterium paratuberculosis (strain ATCC BAA-968 / K-10) (Mycobacterium paratuberculosis).